We begin with the raw amino-acid sequence, 79 residues long: Cell division protein ZapB (79 aa).

Positions 4–78 (EVFEKLEAKV…LRALLGKMEE (75 aa)) form a coiled coil.

It belongs to the ZapB family. In terms of assembly, homodimer. The ends of the coiled-coil dimer bind to each other, forming polymers. Interacts with FtsZ.

Its subcellular location is the cytoplasm. In terms of biological role, non-essential, abundant cell division factor that is required for proper Z-ring formation. It is recruited early to the divisome by direct interaction with FtsZ, stimulating Z-ring assembly and thereby promoting cell division earlier in the cell cycle. Its recruitment to the Z-ring requires functional FtsA or ZipA. This Erwinia tasmaniensis (strain DSM 17950 / CFBP 7177 / CIP 109463 / NCPPB 4357 / Et1/99) protein is Cell division protein ZapB.